The following is a 423-amino-acid chain: Lysosomal acid phosphatase (423 aa).

An N-terminal signal peptide occupies residues 1–30 (MAGRRFGWSRAALLQLILGVNLMVMPRTQA). Residues 31–380 (RTLRFVTLLY…QLAGGPADTE (350 aa)) are Lumenal-facing. Residue His42 is the Nucleophile of the active site. Residues Asn92, Asn133, Asn167, Asn177, Asn191, and Asn267 are each glycosylated (N-linked (GlcNAc...) asparagine). 3 disulfide bridges follow: Cys159-Cys370, Cys212-Cys310, and Cys345-Cys349. Catalysis depends on Asp287, which acts as the Proton donor. Asn322 and Asn331 each carry an N-linked (GlcNAc...) asparagine glycan. A helical transmembrane segment spans residues 381 to 401 (VIVALAVCGSILFLLIVLLLT). The Cytoplasmic segment spans residues 402–423 (VLFRVQAQPPGYRHVPDGEDHA).

This sequence belongs to the histidine acid phosphatase family. The membrane-bound form is converted to the soluble form by sequential proteolytic processing. First, the C-terminal cytoplasmic tail is removed. Cleavage by a lysosomal protease releases the soluble form in the lysosome lumen.

It localises to the lysosome membrane. The protein localises to the lysosome lumen. It catalyses the reaction a phosphate monoester + H2O = an alcohol + phosphate. This chain is Lysosomal acid phosphatase (ACP2), found in Bos taurus (Bovine).